The sequence spans 294 residues: Sarcotoxin-2A (294 aa).

The signal sequence occupies residues 1 to 22 (MKSFVFFAACMAIIALSSLVQA). Residues 23 to 24 (YP) constitute a propeptide, removed by a dipeptidylpeptidase. Position 25 is a pyrrolidone carboxylic acid (Gln-25). Arg-293 carries the post-translational modification Arginine amide.

Belongs to the attacin/sarcotoxin-2 family. Synthesized by the fat body and is eventually secreted into the hemolymph.

The protein localises to the secreted. Functionally, sarcotoxin II is an antibacterial protein which plays a role in the inflammatory response of this insect. The main effect of sarcotoxin II on E.coli may be the inhibition of cell wall synthesis, including septum formation. The polypeptide is Sarcotoxin-2A (Sarcophaga peregrina (Flesh fly)).